We begin with the raw amino-acid sequence, 460 residues long: Inner membrane symporter YicJ (460 aa).

At 1 to 11 (MKSEVLSVKEK) the chain is on the periplasmic side. 2 consecutive transmembrane segments (helical) span residues 12 to 32 (IGYGMGDAASHIIFDNVMLYM) and 33 to 53 (MFFYTDIFGIPAGFVGTMFLV). Residues 54–80 (ARALDAISDPCMGLLADRTRSRWGKFR) lie on the Periplasmic side of the membrane. Residues 81–101 (PWVLFGALPFGIVCVLAYSTP) form a helical membrane-spanning segment. The Cytoplasmic portion of the chain corresponds to 102-116 (DLSMNGKMIYAAITY). The chain crosses the membrane as a helical span at residues 117 to 137 (TLLTLLYTVVNIPYCALGGVI). Over 138-152 (TNDPTQRISLQSWRF) the chain is Periplasmic. Residues 153–173 (VLATAGGMLSTVLMMPLVNLI) traverse the membrane as a helical segment. Residues 174 to 181 (GGDNKPLG) lie on the Cytoplasmic side of the membrane. The helical transmembrane segment at 182-202 (FQGGIAVLSVVAFMMLAFCFF) threads the bilayer. Residues 203–248 (TTKERVEAPPTTTSMREDLRDIWQNDQWRIVGLLTIFNILAVCVRG) are Periplasmic-facing. Residues 249-269 (GAMMYYVTWILGTPEVFVAFL) traverse the membrane as a helical segment. Residues 270–288 (TTYCVGNLIGSALAKPLTD) are Cytoplasmic-facing. Residues 289 to 309 (WKCKVTIFWWTNALLAVISLA) traverse the membrane as a helical segment. Position 310 (Met310) is a topological domain, periplasmic. A helical membrane pass occupies residues 311 to 331 (FFVPMQASITMFVFIFVIGVL). Residues 332-366 (HQLVTPIQWVMMSDTVDYGEWCNGKRLTGISFAGT) lie on the Cytoplasmic side of the membrane. Residues 367–387 (LFVLKLGLAFGGALIGWMLAY) traverse the membrane as a helical segment. The Periplasmic portion of the chain corresponds to 388–403 (GGYDAAEKAQNSATIS). Residues 404–424 (IIIALFTIVPAICYLLSAIIA) form a helical membrane-spanning segment. Residues 425 to 460 (KRYYSLTTHNLKTVMEQLAQGKRRCQQQFTSQEVQN) lie on the Cytoplasmic side of the membrane.

The protein belongs to the sodium:galactoside symporter (TC 2.A.2) family.

It is found in the cell inner membrane. This Escherichia coli (strain K12) protein is Inner membrane symporter YicJ (yicJ).